A 245-amino-acid polypeptide reads, in one-letter code: UPF0246 protein Ldb2075 (245 aa).

This sequence belongs to the UPF0246 family.

This chain is UPF0246 protein Ldb2075, found in Lactobacillus delbrueckii subsp. bulgaricus (strain ATCC 11842 / DSM 20081 / BCRC 10696 / JCM 1002 / NBRC 13953 / NCIMB 11778 / NCTC 12712 / WDCM 00102 / Lb 14).